A 268-amino-acid chain; its full sequence is MSGTTHHHATFPAVEAAAFTRRHLDDLAAGLLGTVRVPGFFGRPALDTMLTSLHRVPVVSFDLDRMHHPMARFGTALNDYRTPELALDADRYWHDADTARRQWAGIGMTPDPLELALDALGRAWGVRPAPATIGGRPAFVGMLREVNDGTFIHYDDINREYRGGLFDQKIVAQLAFNAWLAAPREGGTTTVWRHRWEPADENRRHGYGFQPTAVADDPYVTVAPAAGDALLFNANNYHVVHPGAPGQRRIALACFLGVTAGGELVVWS.

Fe(2+) serves as cofactor.

It carries out the reaction L-gamma-glutamyl-L-propargylglycine + 2-oxoglutarate + O2 = L-gamma-glutamyl-(3R)-L-beta-ethynylserine + succinate + CO2. It functions in the pathway amino-acid metabolism. It participates in antibiotic biosynthesis. Involved in the biosynthesis of terminal alkyne-containing amino acids such as L-beta-ethynylserine, that are produced as antibiotics by S.cattleya. Catalyzes the hydroxylation of the dipeptide L-gamma-glutamyl-L-propargylglycine, leading to L-gamma-glutamyl-L-beta-ethynylserine. Cannot use L-propargylglycine as substrate. The chain is L-gamma-glutamyl-L-propargylglycine hydroxylase from Streptantibioticus cattleyicolor (strain ATCC 35852 / DSM 46488 / JCM 4925 / NBRC 14057 / NRRL 8057) (Streptomyces cattleya).